Here is a 499-residue protein sequence, read N- to C-terminus: uncharacterized protein (499 aa).

FAD contacts are provided by residues 6 to 35 and 272 to 282; these read EAVI…VIER and YRDGRIFLAGD.

The protein belongs to the PheA/TfdB FAD monooxygenase family. FAD is required as a cofactor.

This is an uncharacterized protein from Bacillus subtilis (strain 168).